The primary structure comprises 649 residues: UvrABC system protein C (649 aa).

In terms of domain architecture, GIY-YIG spans 12-91 (SSPGVYLMKS…IKQHRPKYNI (80 aa)). In terms of domain architecture, UVR spans 201 to 236 (NEVARLYRSKMNLASEQMRYEDAARYRDLLRAIEVT). The segment at 603–649 (RLHGGPLPNPPPPGEGAMGDGSIPSPRNGVMDDSIPSPSGRGWPKAG) is disordered.

The protein belongs to the UvrC family. In terms of assembly, interacts with UvrB in an incision complex.

Its subcellular location is the cytoplasm. The UvrABC repair system catalyzes the recognition and processing of DNA lesions. UvrC both incises the 5' and 3' sides of the lesion. The N-terminal half is responsible for the 3' incision and the C-terminal half is responsible for the 5' incision. This Geobacter sp. (strain M21) protein is UvrABC system protein C.